Consider the following 69-residue polypeptide: Sec-independent protein translocase protein TatA (69 aa).

The helical transmembrane segment at Met1–Gly21 threads the bilayer. The disordered stretch occupies residues Glu49–Glu69.

Belongs to the TatA/E family. In terms of assembly, forms a complex with TatC.

The protein localises to the cell inner membrane. Its function is as follows. Part of the twin-arginine translocation (Tat) system that transports large folded proteins containing a characteristic twin-arginine motif in their signal peptide across membranes. TatA could form the protein-conducting channel of the Tat system. In Chlorobium luteolum (strain DSM 273 / BCRC 81028 / 2530) (Pelodictyon luteolum), this protein is Sec-independent protein translocase protein TatA.